We begin with the raw amino-acid sequence, 71 residues long: Sperm-associated antigen 11A (71 aa).

An N-terminal signal peptide occupies residues 1–19; it reads MIPRLLPFFASLLFAALLF. 3 cysteine pairs are disulfide-bonded: cysteine 32-cysteine 61, cysteine 39-cysteine 54, and cysteine 44-cysteine 62.

The protein belongs to the beta-defensin family.

The protein localises to the secreted. In terms of biological role, has antimicrobial activity against E.coli. Plays a role in the defense response in the male reproductive tract, contributing to sperm maturation, storage and protection. This Mus musculus (Mouse) protein is Sperm-associated antigen 11A.